The chain runs to 393 residues: Succinate--CoA ligase [ADP-forming] subunit beta (393 aa).

Residues 9 to 245 form the ATP-grasp domain; sequence KMLFAQYGIP…PSQEDKCETY (237 aa). ATP contacts are provided by residues Lys46, 53–55, Glu99, Ile102, and Glu107; that span reads GRG. Residues Asn200 and Asp214 each coordinate Mg(2+). Substrate-binding positions include Asn265 and 322–324; that span reads GIV.

Belongs to the succinate/malate CoA ligase beta subunit family. Heterotetramer of two alpha and two beta subunits. Requires Mg(2+) as cofactor.

It catalyses the reaction succinate + ATP + CoA = succinyl-CoA + ADP + phosphate. The catalysed reaction is GTP + succinate + CoA = succinyl-CoA + GDP + phosphate. Its pathway is carbohydrate metabolism; tricarboxylic acid cycle; succinate from succinyl-CoA (ligase route): step 1/1. In terms of biological role, succinyl-CoA synthetase functions in the citric acid cycle (TCA), coupling the hydrolysis of succinyl-CoA to the synthesis of either ATP or GTP and thus represents the only step of substrate-level phosphorylation in the TCA. The beta subunit provides nucleotide specificity of the enzyme and binds the substrate succinate, while the binding sites for coenzyme A and phosphate are found in the alpha subunit. The protein is Succinate--CoA ligase [ADP-forming] subunit beta of Baumannia cicadellinicola subsp. Homalodisca coagulata.